The sequence spans 554 residues: Inactive sesquithujene synthase (554 aa).

2 residues coordinate Mg(2+): Asp308 and Asp312. 4 residues coordinate substrate: Asp308, Asp312, Arg449, and Asn452. Residues 308-312 (DDMFD) carry the DDXXD motif motif. Residues Asn452, Ser456, and Glu460 each coordinate Mg(2+).

It belongs to the terpene synthase family. As to quaternary structure, monomer. Mg(2+) serves as cofactor. Requires Mn(2+) as cofactor.

The protein resides in the cytoplasm. It participates in secondary metabolite biosynthesis; terpenoid biosynthesis. In terms of biological role, non-functional sesquiterpene synthase having less than 1% of the activity found in cv. Delprim. This Zea mays (Maize) protein is Inactive sesquithujene synthase.